A 163-amino-acid polypeptide reads, in one-letter code: Halocyanin (163 aa).

Positions 1–24 are cleaved as a signal peptide; it reads MKDISRRRFVLGTGATVAAATLAG. At cysteine 25 the chain carries N-acetylcysteine. Cysteine 25 carries the S-archaeol cysteine lipid modification. Gly residues predominate over residues 26-38; that stretch reads NGNGNGNGNGNGN. The segment at 26 to 48 is disordered; the sequence is NGNGNGNGNGNGNGEPDTPEGRA. One can recognise a Plastocyanin-like domain in the interval 48 to 163; the sequence is ADQFLTDNDA…QGMYGAVIVE (116 aa). Residues histidine 110, cysteine 148, histidine 151, and methionine 156 each coordinate Cu cation.

The protein resides in the cell membrane. Functionally, electron donor. Binds one copper ion. The chain is Halocyanin (hcy) from Natronomonas pharaonis (Natronobacterium pharaonis).